The chain runs to 1311 residues: Suppressor of presenilin protein 4 (1311 aa).

Residues 1–11 (MSSEPTSSIES) are compositionally biased toward polar residues. 2 disordered regions span residues 1-58 (MSSE…DDLN) and 75-95 (MFEDDEEDTVSRRRTRRSTAH). 2 consecutive C2H2-type zinc fingers follow at residues 112 to 134 (HACHKCPSRYESKSSLANHTKMH) and 141 to 163 (FACELCDFSASTLKSLTHHNNIH). The tract at residues 226–304 (EFDTTPPPIL…PPPVRKDVEK (79 aa)) is disordered. Residues 280-293 (SPKGSLPSSSASSV) are compositionally biased toward low complexity. C2H2-type zinc fingers lie at residues 327–349 (QRCPHCPFTTSTVTRLNRHSGGH), 355–379 (YICPSENCNFMCRKAGFLQKHYILH), 451–476 (KKCNIGECEFLTQTLTQLIVHKVKTH), and 487–510 (FLCLTCGHRAKSYAALRTHKLIEH). The segment at 544 to 563 (VKEEPKEADGDESGDESFDS) is disordered. The span at 552–561 (DGDESGDESF) shows a compositional bias: acidic residues. 6 C2H2-type zinc fingers span residues 585–607 (FCCNMCPYKAPTMNRCQRHYDKH), 613–635 (FKCQYCSWSSRSKEVIVNHEKLH), 709–731 (FQCTDCPYTSKYRGDMRSHKKRH), 737–759 (YRCVQCTYTTNRPVSLKDHLKQH), 794–816 (YCCDKCPYVTLALGCLWRHHRNH), and 823–845 (NICSNCSYSSIDQRKMEEHTIIH). The tract at residues 865-1002 (RPVSSLTDLN…ESPEPDESVE (138 aa)) is disordered. Residues 874-897 (NSEKMNERKSTKRKMLDKVEKMEV) are compositionally biased toward basic and acidic residues. A compositionally biased stretch (acidic residues) spans 898 to 907 (GEDEEDDEES). Residues 908-920 (VDKGTDDGDYKQR) show a composition bias toward basic and acidic residues. The span at 956–979 (NRINYSLLSKNGSGKPTPSTSSAN) shows a compositional bias: polar residues. 6 consecutive C2H2-type zinc fingers follow at residues 1022 to 1044 (LKCPDCPYKSSEPDVLEKHRYYH), 1053 to 1075 (YACSDCTFNTYTPTALLQHLKLH), 1104 to 1126 (YYCKNCSFKTSIHRNFIEHSAYH), 1162 to 1184 (KYCKKCTFKCVSQSNFIEHLDRH), 1190 to 1212 (YKCYSCDYSDNTKSVVDFHQLNH), and 1261 to 1284 (LKCPSCEYFCHVSSELAFHMSVHH).

As to expression, expressed in neurons.

It localises to the nucleus. Probable transcriptional regulator, which participates in the transcriptional repression of the presenilin protein hop-1. Might play a role in the oxidative stress response. This is Suppressor of presenilin protein 4 (spr-4) from Caenorhabditis elegans.